We begin with the raw amino-acid sequence, 72 residues long: VVTIVCLDLGYTLKCNKLVPLFYKTCPAGKNLCYKMYMVATPKVPVKRGCIDVCPKSSLLVKYVCCNTDRCN.

The signal sequence occupies residues 1–12 (VVTIVCLDLGYT). Intrachain disulfides connect cysteine 15/cysteine 33, cysteine 26/cysteine 50, cysteine 54/cysteine 65, and cysteine 66/cysteine 71.

It belongs to the three-finger toxin family. Short-chain subfamily. Type IA cytotoxin sub-subfamily. In terms of assembly, monomer in solution; Homodimer and oligomer in the presence of negatively charged lipids forming a pore with a size ranging between 20 and 30 Angstroms. Expressed by the venom gland.

Its subcellular location is the secreted. Functionally, shows cytolytic activity on many different cells by forming a pore in lipid membranes. In vivo, increases heart rate or kills the animal by cardiac arrest. In addition, it binds to heparin with high affinity, interacts with Kv channel-interacting protein 1 (KCNIP1) in a calcium-independent manner, and binds to integrin alpha-V/beta-3 (ITGAV/ITGB3) with moderate affinity. Preferentially binds acidic phospholipids like phosphatidylserine, phosphatidic acid and phosphatidyl glycerol. Has hemolytic activity towards human erythrocytes (EC(50)=0.171 uM) and cytolytic activity towards various cell lines. The protein is Cytotoxin 9 of Naja naja (Indian cobra).